The chain runs to 999 residues: Golgin subfamily A member 2 (999 aa).

Pro residues predominate over residues 1 to 11 (MWPPRFPPPRP). Disordered stretches follow at residues 1–80 (MWPP…PAPP) and 244–288 (ARQK…YNKD). Residues 1–86 (MWPPRFPPPR…PAPPTAATDT (86 aa)) form an interaction with p115/USO1 region. Dimethylated arginine is present on residues Arg-18 and Arg-30. Residues 26-49 (KKKLREYQQKNSPGVPAGAKKKKK) carry the Nuclear localization signal motif. Ser-37, Ser-66, Ser-273, and Ser-438 each carry phosphoserine. A coiled-coil region spans residues 147–895 (LTSSNMKELE…VLRLVNERNE (749 aa)). Polar residues predominate over residues 271–280 (TLSTVSTQQK). The segment at 444 to 468 (SQMEEPPPPEPPAGPSEAEEQLQGE) is disordered. Residues 448-457 (EPPPPEPPAG) show a composition bias toward pro residues. 3 positions are modified to phosphoserine: Ser-697, Ser-934, and Ser-978. Positions 989–999 (DENDEVKIMVV) are interaction with GORASP1/GRASP65.

It belongs to the GOLGA2 family. Homodimer, may assemble into homohexamers. Homotetramer; forms a parallel homotetramer with a flexible rod-like structure that can give rise to I- and Y-shaped conformations. Interacts with GORASP1/GRASP65. The homooligomer forms a complex with GORASP1 with a 1:1 stoichiometry. Interacts with RAB1B that has been activated by GTP-binding. Interacts with p115/USO1; interaction with p115/USO1 inhibits interaction with STX5 and/or RAB1B. Interacts with STX5. Interacts with ZFPL1. Interacts with AKAP450/AKAP9; leading to recruit AKAP450/AKAP9 to the cis-Golgi. Phosphorylated at Ser-37 by CDK1 at the onset of mitosis, inhibiting the interaction with p115/USO1 and triggering Golgi disassembly. A report however suggests that Golgi disassembly is independent of phosphorylation at Ser-37. Phosphorylated at Ser-37 in prophase as the Golgi complex starts to break down, and remains phosphorylated during further breakdown and partitioning of the Golgi fragments in metaphase and anaphase. In telophase, GM130 is dephosphorylated by PP2A as the Golgi fragments start to reassemble. In terms of processing, cleaved by caspases at the onset of apoptosis. Post-translationally, methylation by PRMT5 is required for Golgi ribbon formation. Widely expressed. Detected in brain, kidney, lung, liver, spleen, heart, skeletal muscle, thymus and pancreas. Detected in spermatocytes. Present in oocytes during all oocyte meiotic maturation (at protein level).

The protein resides in the golgi apparatus. It is found in the cis-Golgi network membrane. The protein localises to the endoplasmic reticulum-Golgi intermediate compartment membrane. It localises to the cytoplasm. Its subcellular location is the cytoskeleton. The protein resides in the spindle pole. Peripheral membrane component of the cis-Golgi stack that acts as a membrane skeleton that maintains the structure of the Golgi apparatus, and as a vesicle thether that facilitates vesicle fusion to the Golgi membrane. Required for normal protein transport from the endoplasmic reticulum to the Golgi apparatus and the cell membrane. Together with p115/USO1 and STX5, involved in vesicle tethering and fusion at the cis-Golgi membrane to maintain the stacked and inter-connected structure of the Golgi apparatus. Plays a central role in mitotic Golgi disassembly: phosphorylation at Ser-37 by CDK1 at the onset of mitosis inhibits the interaction with p115/USO1, preventing tethering of COPI vesicles and thereby inhibiting transport through the Golgi apparatus during mitosis. Also plays a key role in spindle pole assembly and centrosome organization. Promotes the mitotic spindle pole assembly by activating the spindle assembly factor TPX2 to nucleate microtubules around the Golgi and capture them to couple mitotic membranes to the spindle: upon phosphorylation at the onset of mitosis, GOLGA2 interacts with importin-alpha via the nuclear localization signal region, leading to recruit importin-alpha to the Golgi membranes and liberate the spindle assembly factor TPX2 from importin-alpha. TPX2 then activates AURKA kinase and stimulates local microtubule nucleation. Upon filament assembly, nascent microtubules are further captured by GOLGA2, thus linking Golgi membranes to the spindle. Regulates the meiotic spindle pole assembly, probably via the same mechanism. Also regulates the centrosome organization. Also required for the Golgi ribbon formation and glycosylation of membrane and secretory proteins. This Mus musculus (Mouse) protein is Golgin subfamily A member 2 (Golga2).